The sequence spans 700 residues: Hedgehog-interacting protein (700 aa).

The first 17 residues, 1 to 17, serve as a signal peptide directing secretion; the sequence is MLKMLSFKLLLLAVALG. The N-linked (GlcNAc...) asparagine glycan is linked to Asn99. 11 disulfide bridges follow: Cys216-Cys536, Cys218-Cys543, Cys402-Cys624, Cys435-Cys452, Cys500-Cys594, Cys608-Cys617, Cys612-Cys623, Cys625-Cys634, Cys639-Cys649, Cys643-Cys655, and Cys657-Cys666. Residues 376–388 form an interaction with SHH zinc binding site region; sequence LDDMEEMDGLSDF. Residue Asp383 participates in Zn(2+) binding. N-linked (GlcNAc...) asparagine glycans are attached at residues Asn416, Asn447, and Asn459. EGF-like domains lie at 607 to 634 and 635 to 667; these read ECSRLCRNGYCTPTGKCCCSPGWEGDFC and RTAKCEPACRHGGVCVRPNKCLCKKGYLGPQCE.

The protein belongs to the HHIP family. In terms of assembly, interacts with all three hedgehog family members, SHH, IHH and DHH. In terms of tissue distribution, widely expressed in fetal and adult tissues. Highest expression in adult heart, liver and pancreas, and in fetal kidney.

The protein resides in the cell membrane. The protein localises to the secreted. It is found in the cytoplasm. Functionally, modulates hedgehog signaling in several cell types including brain and lung through direct interaction with members of the hedgehog family. This is Hedgehog-interacting protein (HHIP) from Homo sapiens (Human).